Here is a 250-residue protein sequence, read N- to C-terminus: Uracil-DNA glycosylase (250 aa).

D78 functions as the Proton acceptor in the catalytic mechanism. A disordered region spans residues 228–250 (RGQKPVDWSGEQNNASRQGEFAL).

This sequence belongs to the uracil-DNA glycosylase (UDG) superfamily. UNG family.

It localises to the cytoplasm. The enzyme catalyses Hydrolyzes single-stranded DNA or mismatched double-stranded DNA and polynucleotides, releasing free uracil.. In terms of biological role, excises uracil residues from the DNA which can arise as a result of misincorporation of dUMP residues by DNA polymerase or due to deamination of cytosine. The protein is Uracil-DNA glycosylase of Bordetella pertussis (strain Tohama I / ATCC BAA-589 / NCTC 13251).